The following is a 391-amino-acid chain: S-adenosylmethionine synthase (391 aa).

ATP is bound at residue His-14. Residue Asp-16 coordinates Mg(2+). Position 42 (Glu-42) interacts with K(+). L-methionine is bound by residues Glu-55 and Gln-98. A flexible loop region spans residues 98-108 (QSPDIAMGVDE). Residues 172–174 (DGK), 238–239 (RF), Asp-247, 253–254 (RK), Ala-270, and Lys-274 each bind ATP. Position 247 (Asp-247) interacts with L-methionine. Lys-278 lines the L-methionine pocket.

The protein belongs to the AdoMet synthase family. As to quaternary structure, homotetramer; dimer of dimers. Mg(2+) is required as a cofactor. It depends on K(+) as a cofactor.

The protein localises to the cytoplasm. It carries out the reaction L-methionine + ATP + H2O = S-adenosyl-L-methionine + phosphate + diphosphate. It participates in amino-acid biosynthesis; S-adenosyl-L-methionine biosynthesis; S-adenosyl-L-methionine from L-methionine: step 1/1. Functionally, catalyzes the formation of S-adenosylmethionine (AdoMet) from methionine and ATP. The overall synthetic reaction is composed of two sequential steps, AdoMet formation and the subsequent tripolyphosphate hydrolysis which occurs prior to release of AdoMet from the enzyme. This is S-adenosylmethionine synthase from Clostridium tetani (strain Massachusetts / E88).